Consider the following 696-residue polypeptide: Protein OS-9 homolog (696 aa).

The N-terminal stretch at 1 to 15 is a signal peptide; that stretch reads MLVVAFASLLGAARA. N-linked (GlcNAc...) asparagine glycosylation is found at Asn-35, Asn-46, and Asn-68. Residues 106 to 224 form the MRH domain; sequence NQCLVSQNGF…QVIVPDLCQL (119 aa). Cys-108 and Cys-121 are disulfide-bonded. A mannooligosaccharide derivative-binding residues include Trp-116, Gln-128, Asp-178, Arg-184, Glu-206, and Tyr-212. 2 disulfides stabilise this stretch: Cys-177/Cys-210 and Cys-192/Cys-222. Asn-276, Asn-290, and Asn-372 each carry an N-linked (GlcNAc...) asparagine glycan. Disordered regions lie at residues 450–600 and 667–696; these read IEAS…DNSD and TLGN…DDEL. The segment covering 458–467 has biased composition (polar residues); that stretch reads TKASESTPVS. The segment covering 482–498 has biased composition (basic and acidic residues); that stretch reads RSRDKEEYFKENEKQGE. Composition is skewed to polar residues over residues 499-518, 528-553, and 585-597; these read ENNA…GTIS, NQKQ…SAND, and NIDN…TLND. Residue Asn-588 is glycosylated (N-linked (GlcNAc...) asparagine). Residues 685–696 show a composition bias toward basic and acidic residues; the sequence is ESDRNGVIDDEL.

This sequence belongs to the OS-9 family. Interacts with missfolded ER lumenal proteins.

It is found in the endoplasmic reticulum membrane. Its function is as follows. Lectin involved in the quality control of the secretory pathway. As a member of the endoplasmic reticulum-associated degradation lumenal (ERAD-L) surveillance system, targets misfolded endoplasmic reticulum lumenal glycoproteins for degradation. This Candida glabrata (strain ATCC 2001 / BCRC 20586 / JCM 3761 / NBRC 0622 / NRRL Y-65 / CBS 138) (Yeast) protein is Protein OS-9 homolog (YOS9).